Here is a 187-residue protein sequence, read N- to C-terminus: UPF0398 protein LBA1157 (187 aa).

It belongs to the UPF0398 family.

This is UPF0398 protein LBA1157 from Lactobacillus acidophilus (strain ATCC 700396 / NCK56 / N2 / NCFM).